The sequence spans 585 residues: Pentatricopeptide repeat-containing protein At4g21170 (585 aa).

12 PPR repeats span residues 152 to 186 (LSVS…RLSP), 187 to 221 (SQSA…GIVS), 222 to 247 (DELT…KLME), 252 to 286 (SCKI…KLEL), 287 to 321 (SFCS…KFVT), 324 to 358 (DSAV…ETVR), 360 to 394 (WDST…GITV), 396 to 431 (DESC…GFVP), 432 to 466 (CTHK…EVYF), 467 to 501 (DSFA…KGSL), 502 to 534 (DVNA…MKEI), and 538 to 572 (NSKS…GLKP).

This sequence belongs to the PPR family. P subfamily.

In Arabidopsis thaliana (Mouse-ear cress), this protein is Pentatricopeptide repeat-containing protein At4g21170.